Reading from the N-terminus, the 79-residue chain is Conotoxin Vi6.1 (79 aa).

The first 22 residues, 1-22, serve as a signal peptide directing secretion; sequence MKLTCVLIITVLFLTASQLITA. The propeptide occupies 23–47; it reads DYSRDQRQYRAVRLGDEMRNFKGAR. Intrachain disulfides connect Cys49/Cys62, Cys56/Cys67, and Cys61/Cys77. 4-hydroxyproline is present on residues Pro60 and Pro63.

As to expression, expressed by the venom duct.

The protein localises to the secreted. Functionally, ion channel inhibitor that inhibits the increase in intracellular calcium upon depolarization in DRG neurons. In vivo, both intraperitoneal and intracranial injections into mice induce hyperactivity. This is Conotoxin Vi6.1 from Conus virgo (Virgin cone).